Reading from the N-terminus, the 224-residue chain is MTQFKLIGFDLDGTLVNSLPDLALSVNSAFAEFDLPQAPEDLVLTWIGNGADILIARALAWAKAQTGKTLNDEQIKALKRRFGFYYGENLCNLSVLYPNVKSTLETLKQKGYLLAVVTNKPTKHVQPVLQAFGIDHLFSELLGGQSLPAIKPHPAPLYYLCGKFGLYPKQVLFVGDSKNDILAAHTAGCAVVGLTYGYNYNIPIAESKPDWVFDDFAQILTILE.

The active-site Nucleophile is Asp10. Residues Asp10, Asp12, and Asp176 each contribute to the Mg(2+) site.

It belongs to the HAD-like hydrolase superfamily. CbbY/CbbZ/Gph/YieH family. Mg(2+) serves as cofactor.

The catalysed reaction is 2-phosphoglycolate + H2O = glycolate + phosphate. The protein operates within organic acid metabolism; glycolate biosynthesis; glycolate from 2-phosphoglycolate: step 1/1. Specifically catalyzes the dephosphorylation of 2-phosphoglycolate. Is involved in the dissimilation of the intracellular 2-phosphoglycolate formed during the DNA repair of 3'-phosphoglycolate ends, a major class of DNA lesions induced by oxidative stress. The chain is Phosphoglycolate phosphatase from Pasteurella multocida (strain Pm70).